We begin with the raw amino-acid sequence, 127 residues long: Odontogenesis-associated phosphoprotein (127 aa).

Residues 1–23 (MAPGFHFSWLLVSWLVVTTVKGQ) form the signal peptide.

In terms of tissue distribution, expressed in enamel organs and not expressed in the heart, kidney, or spleen.

Its subcellular location is the secreted. In terms of biological role, may promote nucleation of hydroxyapatite. This Rattus norvegicus (Rat) protein is Odontogenesis-associated phosphoprotein.